Reading from the N-terminus, the 1556-residue chain is Ubiquitin carboxyl-terminal hydrolase 47 (1556 aa).

The segment at 117–231 (MKSDGEKAKS…AKKTAKVTSK (115 aa)) is disordered. Over residues 146 to 156 (ASGSSSPSKAK) the composition is skewed to low complexity. Phosphoserine occurs at positions 172 and 173. A compositionally biased stretch (low complexity) spans 180 to 189 (IKTTAAKISK). The segment covering 191–200 (GSEKAPRASP) has biased composition (basic and acidic residues). Positions 208-219 (TEINSKNTSSES) are enriched in polar residues. Ser-238 bears the Phosphoserine mark. Residues 396–779 (VGLVNQAMTC…NAYMLMYRQV (384 aa)) enclose the USP domain. Cys-405 serves as the catalytic Nucleophile. 2 stretches are compositionally biased toward polar residues: residues 628 to 642 (NRSG…QLNG) and 661 to 673 (LSSG…SSSQ). Positions 628 to 697 (NRSGNSGEQN…SSSTSKSAKQ (70 aa)) are disordered. A compositionally biased stretch (low complexity) spans 688 to 697 (SSSTSKSAKQ). His-720 acts as the Proton acceptor in catalysis. Positions 1087–1148 (EPMSQPSPSH…LSSPEDEAAS (62 aa)) are disordered. Residues 1109-1125 (DGDRTLVETDNMAHRGG) show a composition bias toward basic and acidic residues. Over residues 1128 to 1141 (SQVSSTSHSPQLSS) the composition is skewed to low complexity. Phosphoserine is present on residues Ser-1131, Ser-1132, Ser-1140, Ser-1141, Ser-1199, Ser-1201, and Ser-1205.

It belongs to the peptidase C19 family. In terms of assembly, interacts with ttk.

The protein localises to the nucleus. It catalyses the reaction Thiol-dependent hydrolysis of ester, thioester, amide, peptide and isopeptide bonds formed by the C-terminal Gly of ubiquitin (a 76-residue protein attached to proteins as an intracellular targeting signal).. In terms of biological role, ubiquitin-specific protease that deubiquitinates target proteins to regulate different cellular and developmental pathways. Functions downstream of Dsor1/MEK to positively regulate the Ras/MAPK signaling pathway. Likely to modulate the pathway during various cellular and developmental processes including rl/MAPK activation by the receptors InR, Egfr and sevenless/sev. Functions in the post-translational stabilization of rl/MAPK levels in a mechanism that is independent of rl activity and opposes the activity of the E2 enzyme Unc6 and the putative E3 ligases poe, Ufd4 and Kcmf1, which mediate the ubiquitination and proteasomal degradation of rl. During eye development it may also act downstream of rl/MAPK to negatively regulate the Ras/MAPK signaling pathway by stabilizing the transcriptional repressor ttk and consequently inhibiting photoreceptor cell development. This suggests that at least during eye development, it may act in both the positive and negative regulation of the Ras/MAPK signaling pathway to mediate the development of different cell types. Positively regulates border follicle cell migration during oogenesis by mediating the deubiquitination and stabilization of slbo. In the wing disks it positively regulates wg signaling by stabilizing arm. Has an effect on position-effect variegation. The polypeptide is Ubiquitin carboxyl-terminal hydrolase 47 (Drosophila melanogaster (Fruit fly)).